Reading from the N-terminus, the 23-residue chain is Basic phospholipase A2 homolog (23 aa).

In terms of processing, contains 7 disulfide bonds. In terms of tissue distribution, expressed by the venom gland.

It localises to the secreted. The polypeptide is Basic phospholipase A2 homolog (Trimeresurus stejnegeri (Chinese green tree viper)).